We begin with the raw amino-acid sequence, 78 residues long: Cell division topological specificity factor (78 aa).

This sequence belongs to the MinE family.

Its function is as follows. Prevents the cell division inhibition by proteins MinC and MinD at internal division sites while permitting inhibition at polar sites. This ensures cell division at the proper site by restricting the formation of a division septum at the midpoint of the long axis of the cell. This Helicobacter hepaticus (strain ATCC 51449 / 3B1) protein is Cell division topological specificity factor.